The following is a 173-amino-acid chain: Adenine phosphoribosyltransferase (173 aa).

Belongs to the purine/pyrimidine phosphoribosyltransferase family. Homodimer.

The protein localises to the cytoplasm. It carries out the reaction AMP + diphosphate = 5-phospho-alpha-D-ribose 1-diphosphate + adenine. It functions in the pathway purine metabolism; AMP biosynthesis via salvage pathway; AMP from adenine: step 1/1. Functionally, catalyzes a salvage reaction resulting in the formation of AMP, that is energically less costly than de novo synthesis. This Desulfosudis oleivorans (strain DSM 6200 / JCM 39069 / Hxd3) (Desulfococcus oleovorans) protein is Adenine phosphoribosyltransferase.